The following is a 495-amino-acid chain: Major facilitator-type transporter hxnP (495 aa).

Positions 1-24 are disordered; that stretch reads MGATATDIEKVPSAGTPDEPKAGE. 5 helical membrane passes run 36 to 55, 84 to 104, 123 to 143, 145 to 165, and 177 to 197; these read SFVR…MYFF, LLIL…NLLI, VWGI…LLAI, IILG…FTLF, and VLQS…FGLF. An N-linked (GlcNAc...) asparagine glycan is attached at Asn200. The next 5 helical transmembrane spans lie at 209 to 229, 282 to 302, 314 to 334, 341 to 361, and 368 to 388; these read WLFI…FWWL, VITF…PIIV, LWTV…AKSS, SLHI…LASI, and GVSY…TCLV. Asn395 carries N-linked (GlcNAc...) asparagine glycosylation. The next 2 helical transmembrane spans lie at 404–424 and 436–456; these read ANTG…AATF and LVAT…MGTW.

This sequence belongs to the major facilitator superfamily.

It is found in the cell membrane. Functionally, major facilitator-type transporter, part of the hnx cluster involved in the purine degradation. The nicotinate hydroxylase hnxS accepts nicotinate as a substrate and catalyzes the first step of nicotinate catabolism. The major facilitator-type transporters hxnP and hxnZ are probably involved in the uptake of nicotinate-derived metabolites, and the oxidoreductases hxnT and hxnY in the further metabolism of 6-OH nicotinic acid. This chain is Major facilitator-type transporter hxnP, found in Emericella nidulans (strain FGSC A4 / ATCC 38163 / CBS 112.46 / NRRL 194 / M139) (Aspergillus nidulans).